Here is a 149-residue protein sequence, read N- to C-terminus: Large ribosomal subunit protein bL9 (149 aa).

This sequence belongs to the bacterial ribosomal protein bL9 family.

Its function is as follows. Binds to the 23S rRNA. The polypeptide is Large ribosomal subunit protein bL9 (Legionella pneumophila (strain Lens)).